Reading from the N-terminus, the 482-residue chain is Glutamate--tRNA ligase (482 aa).

Residues 9–19 (PSPTGYLHIGG) carry the 'HIGH' region motif. The short motif at 252–256 (KLSKR) is the 'KMSKS' region element. ATP is bound at residue K255.

The protein belongs to the class-I aminoacyl-tRNA synthetase family. Glutamate--tRNA ligase type 1 subfamily. Monomer.

It localises to the cytoplasm. The catalysed reaction is tRNA(Glu) + L-glutamate + ATP = L-glutamyl-tRNA(Glu) + AMP + diphosphate. Its function is as follows. Catalyzes the attachment of glutamate to tRNA(Glu) in a two-step reaction: glutamate is first activated by ATP to form Glu-AMP and then transferred to the acceptor end of tRNA(Glu). The protein is Glutamate--tRNA ligase of Ureaplasma urealyticum serovar 10 (strain ATCC 33699 / Western).